A 203-amino-acid polypeptide reads, in one-letter code: Mpv17-like protein (203 aa).

Over 1 to 12 the chain is Cytoplasmic; it reads MRILIQFTKRHP. A helical membrane pass occupies residues 13-30; that stretch reads WLTNVTIYGSLFASADIV. At 31–49 the chain is on the lumenal side; the sequence is QQKLSKSPTEPIDFKQTAK. Residues 50-69 form a helical membrane-spanning segment; that stretch reads VGLVGFCFHANFNFFWLRFI. The Cytoplasmic segment spans residues 70–89; that stretch reads ERTFPGSAPLNVIRKVACDQ. A helical transmembrane segment spans residues 90 to 107; the sequence is LMAAPITISAFYTGLSLL. Residues 108-143 lie on the Lumenal side of the membrane; it reads DGERDVFKNLKEKFWPTYKTGVMCWTVFQTINFSVI. A helical membrane pass occupies residues 144–166; that stretch reads PPFVRTAYIGVCAFLWTTFLCYI. The Cytoplasmic segment spans residues 167–203; that stretch reads RNRDINEVTTRLLHAVPNIRGKMAFPQDQDDNKPADK.

Belongs to the peroxisomal membrane protein PXMP2/4 family.

The protein resides in the peroxisome membrane. Its function is as follows. Participates in reactive oxygen species metabolism by up- or down-regulation of the genes of antioxidant enzymes. Protective against the mitochondrial apoptotic cascade. This chain is Mpv17-like protein (mpv17l), found in Xenopus laevis (African clawed frog).